A 188-amino-acid chain; its full sequence is Elongation factor P (188 aa).

Belongs to the elongation factor P family.

It is found in the cytoplasm. Its pathway is protein biosynthesis; polypeptide chain elongation. Involved in peptide bond synthesis. Stimulates efficient translation and peptide-bond synthesis on native or reconstituted 70S ribosomes in vitro. Probably functions indirectly by altering the affinity of the ribosome for aminoacyl-tRNA, thus increasing their reactivity as acceptors for peptidyl transferase. This is Elongation factor P from Methylorubrum populi (strain ATCC BAA-705 / NCIMB 13946 / BJ001) (Methylobacterium populi).